We begin with the raw amino-acid sequence, 72 residues long: DNA-directed RNA polymerase subunit epsilon (72 aa).

This sequence belongs to the RNA polymerase subunit epsilon family. RNAP is composed of a core of 2 alpha, a beta and a beta' subunit. The core is associated with a delta subunit, and at least one of epsilon or omega. When a sigma factor is associated with the core the holoenzyme is formed, which can initiate transcription.

It carries out the reaction RNA(n) + a ribonucleoside 5'-triphosphate = RNA(n+1) + diphosphate. Functionally, a non-essential component of RNA polymerase (RNAP). In Staphylococcus aureus (strain JH1), this protein is DNA-directed RNA polymerase subunit epsilon.